The sequence spans 268 residues: GTP cyclohydrolase FolE2 (268 aa).

The protein belongs to the GTP cyclohydrolase IV family.

The catalysed reaction is GTP + H2O = 7,8-dihydroneopterin 3'-triphosphate + formate + H(+). It functions in the pathway cofactor biosynthesis; 7,8-dihydroneopterin triphosphate biosynthesis; 7,8-dihydroneopterin triphosphate from GTP: step 1/1. In terms of biological role, converts GTP to 7,8-dihydroneopterin triphosphate. This Janthinobacterium sp. (strain Marseille) (Minibacterium massiliensis) protein is GTP cyclohydrolase FolE2.